A 56-amino-acid polypeptide reads, in one-letter code: Large ribosomal subunit protein bL32 (56 aa).

This sequence belongs to the bacterial ribosomal protein bL32 family.

The polypeptide is Large ribosomal subunit protein bL32 (Prochlorococcus marinus (strain MIT 9215)).